The following is a 169-amino-acid chain: Ribosomal RNA large subunit methyltransferase H (169 aa).

S-adenosyl-L-methionine contacts are provided by residues Leu-85, Gly-117, and 136 to 141; that span reads LGELTW.

This sequence belongs to the RNA methyltransferase RlmH family. In terms of assembly, homodimer.

It localises to the cytoplasm. The catalysed reaction is pseudouridine(1915) in 23S rRNA + S-adenosyl-L-methionine = N(3)-methylpseudouridine(1915) in 23S rRNA + S-adenosyl-L-homocysteine + H(+). Functionally, specifically methylates the pseudouridine at position 1915 (m3Psi1915) in 23S rRNA. The sequence is that of Ribosomal RNA large subunit methyltransferase H from Brucella abortus biovar 1 (strain 9-941).